The sequence spans 669 residues: MSKEIAKKRIEELRDLLNTFNYQYHVLDNPSVSDAEYDRNMQELIKLEAENPEFMSEDSPSVRVGGTVLDIFEKVTHKSPMLSLGNAFNEGDLRDFDRRVRQGIDDANVRYICELKIDGLAVSLHYEKGRFIQGATRGDGVTGEDITQNLKTIKAIPLRLNEEVTLEARGEAYMPKRSFVKLNEEKEQNGEDVFANPRNAAAGSIRQLDPKIAAKRNLSMFVYGLANVEEKTILSHSESLDFLGELGFKTNPNRRTCETIEEVIAYVEEWQEKRPHLDYEIDGIVIKVDDVALQESLGTTAKSPRWAIAYKFPAEEVVTRLTGIELSVGRTGVVTPTAELEPVRVAGTIVRRASLHNEDLIREKDIRIGDYVVVKKAGDIIPEVVNVLFDKRTGEEEEYHMPTHCPACESELVRLEEEVALRCINPTCPAQIREGLIHFVSRNAMNIDGLGERVITQLFEADYIRTFADLYSLTKEQLLQLERFGEKSATNLVQAIENSKENSLERLLFGLGIRHVGAKAARTFAEHFETMDALVKATEEELKAINEIGEKMAQSVVAYFDNEDVLELLQQFKEYGVNMTYKGMKIADLQNVESYFAGKTVVLTGKLEVMGRSEAKKKIEALGGKVTGSVSKSTDLVVAGEAAGSKLAQAEKHNVEVWNEERFLQELNK.

Residues 34-38 (DAEYD), 83-84 (SL), and glutamate 114 contribute to the NAD(+) site. Lysine 116 acts as the N6-AMP-lysine intermediate in catalysis. The NAD(+) site is built by arginine 137, glutamate 171, lysine 287, and lysine 311. Cysteine 405, cysteine 408, cysteine 423, and cysteine 428 together coordinate Zn(2+). A BRCT domain is found at 591 to 669 (NVESYFAGKT…EERFLQELNK (79 aa)).

The protein belongs to the NAD-dependent DNA ligase family. LigA subfamily. The cofactor is Mg(2+). It depends on Mn(2+) as a cofactor.

It catalyses the reaction NAD(+) + (deoxyribonucleotide)n-3'-hydroxyl + 5'-phospho-(deoxyribonucleotide)m = (deoxyribonucleotide)n+m + AMP + beta-nicotinamide D-nucleotide.. DNA ligase that catalyzes the formation of phosphodiester linkages between 5'-phosphoryl and 3'-hydroxyl groups in double-stranded DNA using NAD as a coenzyme and as the energy source for the reaction. It is essential for DNA replication and repair of damaged DNA. The sequence is that of DNA ligase from Bacillus cereus (strain AH187).